A 278-amino-acid polypeptide reads, in one-letter code: Dermonecrotic toxin LbSicTox-betaIA1a (278 aa).

His12 is a catalytic residue. Residues Glu32 and Asp34 each contribute to the Mg(2+) site. His48 (nucleophile) is an active-site residue. 2 disulfide bridges follow: Cys52/Cys58 and Cys54/Cys197. Residue Asp92 participates in Mg(2+) binding. A glycan (N-linked (GlcNAc...) asparagine) is linked at Asn258.

It belongs to the arthropod phospholipase D family. Class II subfamily. Class IIb sub-subfamily. Expressed by the venom gland.

It is found in the secreted. It carries out the reaction an N-(acyl)-sphingosylphosphoethanolamine = an N-(acyl)-sphingosyl-1,3-cyclic phosphate + ethanolamine. The enzyme catalyses a 1-acyl-sn-glycero-3-phosphocholine = a 1-acyl-sn-glycero-2,3-cyclic phosphate + choline. The catalysed reaction is a 1-acyl-sn-glycero-3-phosphoethanolamine = a 1-acyl-sn-glycero-2,3-cyclic phosphate + ethanolamine. Functionally, this toxin does not show activity on sphingomyelin (SM) and does not show dermonecrotic activities. This toxin is a member of dermonecrotic toxins that cleave the phosphodiester linkage between the phosphate and headgroup of certain phospholipids (sphingolipid and lysolipid substrates), forming an alcohol (often choline) and a cyclic phosphate. It may act on ceramide phosphoethanolamine (CPE), lysophosphatidylcholine (LPC) and lysophosphatidylethanolamine (LPE), but not on lysophosphatidylserine (LPS), and lysophosphatidylglycerol (LPG). It may act by transphosphatidylation, releasing exclusively cyclic phosphate products as second products. The protein is Dermonecrotic toxin LbSicTox-betaIA1a of Loxosceles boneti (North American fiddleback spider).